Reading from the N-terminus, the 274-residue chain is Serine protease 28 (274 aa).

The first 26 residues, 1–26 (MFRLLLLALSCLESTVFMASVSISRS), serve as a signal peptide directing secretion. Residues 31–274 (IVGGQRTPPG…SLAWIHQHIQ (244 aa)) enclose the Peptidase S1 domain. A disulfide bridge links Cys-62 with Cys-78. Residue His-77 is the Charge relay system of the active site. A glycan (N-linked (GlcNAc...) asparagine) is linked at Asn-106. The Charge relay system role is filled by Asp-124. 3 disulfides stabilise this stretch: Cys-158-Cys-233, Cys-191-Cys-214, and Cys-223-Cys-251. Residue Ser-227 is the Charge relay system of the active site.

The protein belongs to the peptidase S1 family. In terms of assembly, homooligomer, heterodimer and heterotetramer. Able to form homo- and hetero- tetrameric structures. Heterotetramer is far more stable than the homotetramer. As to expression, expressed in embryos throughout the preimplantation period, during blastocyst hatching and embryo outgrowth. Found in uterus especially in glandular epithelium.

The protein resides in the secreted. Its activity is regulated as follows. Inhibited by benzamidine, (4-amidino-phenyl)-methane-sulfonyl (APMSF), N-p-tosyl-L-lysine chloromethylketone (TLCK), gabexate, mesylate, BABIM and trypsin soybean inhibitor (TSI). Involved in embryo hatching and implantation. The sequence is that of Serine protease 28 (Prss28) from Mus musculus (Mouse).